The primary structure comprises 402 residues: Ferredoxin--NADP reductase (402 aa).

Residues 18 to 74 (NRLFIYEVVGLGGDGRNENSLVRKSGTTFITVPYARMNQEMQRITKLGGKIVSIRPA) enclose the CpcD-like domain. Residues 80-101 (IVSEGQSSAQASAQSPMASSTK) are disordered. The span at 85–99 (QSSAQASAQSPMASS) shows a compositional bias: low complexity. The FAD-binding FR-type domain occupies 120-245 (KTPFLGKCIE…TGPVGKEMLL (126 aa)). FAD-binding positions include 179 to 182 (RLYS), 200 to 202 (CVR), tyrosine 206, 218 to 220 (VCS), and threonine 260. NADP(+) contacts are provided by serine 182 and arginine 202. Residues threonine 260, 292–293 (VP), 322–323 (SR), lysine 332, 332–336 (KVYVQ), 361–362 (GL), and glutamate 400 contribute to the NADP(+) site.

Belongs to the ferredoxin--NADP reductase type 1 family. It depends on FAD as a cofactor.

The protein localises to the cellular thylakoid membrane. It catalyses the reaction 2 reduced [2Fe-2S]-[ferredoxin] + NADP(+) + H(+) = 2 oxidized [2Fe-2S]-[ferredoxin] + NADPH. The polypeptide is Ferredoxin--NADP reductase (petH) (Picosynechococcus sp. (strain ATCC 27264 / PCC 7002 / PR-6) (Agmenellum quadruplicatum)).